We begin with the raw amino-acid sequence, 979 residues long: Pro-apoptotic serine protease NMA111 (979 aa).

Positions methionine 1–leucine 20 are disordered. Residues valine 65–leucine 255 form a serine protease region. Residues histidine 103, aspartate 134, and serine 217 each act as charge relay system in the active site. PDZ domains are found at residues tryptophan 273 to threonine 361 and serine 750 to glycine 836.

Belongs to the peptidase S1C family.

Its subcellular location is the nucleus. Nuclear serine protease which mediates apoptosis. The sequence is that of Pro-apoptotic serine protease NMA111 (NMA111) from Candida glabrata (strain ATCC 2001 / BCRC 20586 / JCM 3761 / NBRC 0622 / NRRL Y-65 / CBS 138) (Yeast).